Consider the following 222-residue polypeptide: MASFAASQTCFLTTNPTCLKPNSPQKSSTFLPFSAPLSSSSSFPGCGLVHVASNKKNRASFVVTNAVRELEGYVTKAQSFRFAIVVARFNEFVTRRLMEGALDTFKKYSVNEDIDVVWVPGAYELGVTAQALGKSGKYHAIVCLGAVVKGDTSHYDAVVNSASSGVLSAGLNSGVPCVFGVLTCDNMDQAINRAGGKAGNKGAESALTAIEMASLFEHHLKA.

The transit peptide at 1–66 (MASFAASQTC…NRASFVVTNA (66 aa)) directs the protein to the chloroplast. Residues F89, 122-124 (AYE), and 146-148 (AVV) contribute to the 5-amino-6-(D-ribitylamino)uracil site. Residue 151-152 (DT) coordinates (2S)-2-hydroxy-3-oxobutyl phosphate. H154 acts as the Proton donor in catalysis. F179 is a 5-amino-6-(D-ribitylamino)uracil binding site. R193 serves as a coordination point for (2S)-2-hydroxy-3-oxobutyl phosphate.

The protein belongs to the DMRL synthase family. Oligomer forming an icosahedral capsid.

It localises to the plastid. Its subcellular location is the chloroplast. It catalyses the reaction (2S)-2-hydroxy-3-oxobutyl phosphate + 5-amino-6-(D-ribitylamino)uracil = 6,7-dimethyl-8-(1-D-ribityl)lumazine + phosphate + 2 H2O + H(+). It functions in the pathway cofactor biosynthesis; riboflavin biosynthesis; riboflavin from 2-hydroxy-3-oxobutyl phosphate and 5-amino-6-(D-ribitylamino)uracil: step 1/2. Its function is as follows. Catalyzes the formation of 6,7-dimethyl-8-ribityllumazine by condensation of 5-amino-6-(D-ribitylamino)uracil with 3,4-dihydroxy-2-butanone 4-phosphate. This is the penultimate step in the biosynthesis of riboflavin. The protein is 6,7-dimethyl-8-ribityllumazine synthase, chloroplastic of Spinacia oleracea (Spinach).